We begin with the raw amino-acid sequence, 521 residues long: Ribonuclease Y (521 aa).

Residues 10-30 (LIITAGVSIALAIVAFFLGYL) form a helical membrane-spanning segment. The KH domain maps to 210–270 (TVSVVTLPND…IRREIAKLTL (61 aa)). The HD domain maps to 336-430 (VLAHSIEVAN…IQAADSVSAA (95 aa)).

It belongs to the RNase Y family.

Its subcellular location is the cell membrane. Its function is as follows. Endoribonuclease that initiates mRNA decay. In Caldicellulosiruptor saccharolyticus (strain ATCC 43494 / DSM 8903 / Tp8T 6331), this protein is Ribonuclease Y.